Consider the following 372-residue polypeptide: Actin-related protein 2/3 complex subunit 1B (372 aa).

WD repeat units lie at residues 6–45 (FLVE…WTKV), 50–89 (EHNG…WKPT), 94–135 (RINR…WVCK), 140–179 (PIRS…VEER), 242–280 (SETL…GMLS), and 324–367 (LHKN…SALK).

Belongs to the WD repeat ARPC1 family. As to quaternary structure, component of the Arp2/3 complex composed of ACTR2/ARP2, ACTR3/ARP3, ARPC1B/p41-ARC, ARPC2/p34-ARC, ARPC3/p21-ARC, ARPC4/p20-ARC and ARPC5/p16-ARC.

It localises to the cytoplasm. It is found in the cytoskeleton. Its subcellular location is the nucleus. Its function is as follows. Component of the Arp2/3 complex, a multiprotein complex that mediates actin polymerization upon stimulation by nucleation-promoting factor (NPF). The Arp2/3 complex mediates the formation of branched actin networks in the cytoplasm, providing the force for cell motility. In addition to its role in the cytoplasmic cytoskeleton, the Arp2/3 complex also promotes actin polymerization in the nucleus, thereby regulating gene transcription and repair of damaged DNA. The Arp2/3 complex promotes homologous recombination (HR) repair in response to DNA damage by promoting nuclear actin polymerization, leading to drive motility of double-strand breaks (DSBs). This chain is Actin-related protein 2/3 complex subunit 1B, found in Homo sapiens (Human).